The primary structure comprises 1094 residues: Probable arabinosyltransferase C (1094 aa).

13 helical membrane-spanning segments follow: residues 28–50, 232–251, 264–286, 341–360, 373–392, 431–453, 466–488, 530–552, 565–582, 586–608, 620–642, 657–679, and 700–722; these read IARYVAVVAGLLGAVLAIATPLL, AAMILGVALTGAALVALHIL, PARWWSTGGLDTLVIAVLVWWHF, SIWMRLPTLAMALTCWWVIS, TSRAAAWTAAGMFLAVWLPL, IGALTLFSGPTGIASIGALLVAI, RFGVLPLVAPILAAATVTAIPIF, SIARRFAVLALVLALAVSVAMSL, SRRIIGITIISFLAMMFT, WTHHFGVFAGLAGSLGALAAVAV, TVFAAVVVFVLALSFASVNGWWY, WRWSLTTALLELTVLVLLLAAWF, and LAGIVQSPLAIATWLLVLFEVVS. The span at 817-831 shows a compositional bias: low complexity; the sequence is GSEPGTEGGTTAAPG. Residues 817 to 836 are disordered; the sequence is GSEPGTEGGTTAAPGINGSR.

The protein belongs to the emb family.

The protein resides in the cell membrane. Functionally, arabinosyl transferase responsible for the polymerization of arabinose into the arabinan of arabinogalactan. The protein is Probable arabinosyltransferase C (embC) of Mycobacterium tuberculosis (strain CDC 1551 / Oshkosh).